The sequence spans 120 residues: Large ribosomal subunit protein eL8 (120 aa).

It belongs to the eukaryotic ribosomal protein eL8 family. Part of the 50S ribosomal subunit. Probably part of the RNase P complex.

The protein localises to the cytoplasm. Multifunctional RNA-binding protein that recognizes the K-turn motif in ribosomal RNA, the RNA component of RNase P, box H/ACA, box C/D and box C'/D' sRNAs. The protein is Large ribosomal subunit protein eL8 of Haloquadratum walsbyi (strain DSM 16790 / HBSQ001).